Consider the following 1028-residue polypeptide: Pro-apoptotic serine protease nma111 (1028 aa).

Positions 1–46 are disordered; that stretch reads MDLNGETSTKRKRSSVAAPAERPAKHLKPGNSTLTPGDATPANGTV. The tract at residues 82–266 is serine protease; sequence VVSIHFCQTC…AATDYFLPLD (185 aa). Catalysis depends on charge relay system residues histidine 120, aspartate 151, and serine 233. 2 PDZ domains span residues 289–374 and 876–957; these read QWIL…LLVQ and VFCG…VTFD. The segment covering 991 to 1001 has biased composition (basic and acidic residues); the sequence is SHERDRHKDGI. The disordered stretch occupies residues 991–1028; that stretch reads SHERDRHKDGITPDAANLNPDAMDEVYEEVSDVEPEVD. Acidic residues predominate over residues 1012-1028; that stretch reads AMDEVYEEVSDVEPEVD.

The protein belongs to the peptidase S1C family.

It localises to the nucleus. Nuclear serine protease which mediates apoptosis. The protein is Pro-apoptotic serine protease nma111 (nma111) of Aspergillus fumigatus (strain ATCC MYA-4609 / CBS 101355 / FGSC A1100 / Af293) (Neosartorya fumigata).